Consider the following 588-residue polypeptide: Mediator of RNA polymerase II transcription subunit 26 (588 aa).

The 78-residue stretch at 10-87 (QMRDRLLQAI…RSWQKLIEPV (78 aa)) folds into the TFIIS N-terminal domain. 2 disordered regions span residues 112–393 (RPEM…YTVN) and 412–441 (KLTF…PTEQ). Basic and acidic residues predominate over residues 123–133 (SIHDLKNRNDI). Residues 179 to 191 (PLPTNGISGSPES) show a composition bias toward polar residues. Basic and acidic residues predominate over residues 207 to 218 (SRLEPSDNEKHS). A compositionally biased stretch (pro residues) spans 314 to 325 (SPLPLAQPPTPP). Phosphoserine is present on residues S435 and S458.

It belongs to the Mediator complex subunit 26 family. As to quaternary structure, component of the Mediator complex, which is composed of MED1, MED4, MED6, MED7, MED8, MED9, MED10, MED11, MED12, MED13, MED13L, MED14, MED15, MED16, MED17, MED18, MED19, MED20, MED21, MED22, MED23, MED24, MED25, MED26, MED27, MED29, MED30, MED31, CCNC, CDK8 and CDC2L6/CDK11. The MED12, MED13, CCNC and CDK8 subunits form a distinct module termed the CDK8 module. Mediator containing the CDK8 module is less active than Mediator lacking this module in supporting transcriptional activation. Individual preparations of the Mediator complex lacking one or more distinct subunits have been variously termed ARC, CRSP, DRIP, PC2, SMCC and TRAP. Interacts with CEBPB (when not methylated).

Its subcellular location is the nucleus. Its function is as follows. Component of the Mediator complex, a coactivator involved in the regulated transcription of nearly all RNA polymerase II-dependent genes. Mediator functions as a bridge to convey information from gene-specific regulatory proteins to the basal RNA polymerase II transcription machinery. Mediator is recruited to promoters by direct interactions with regulatory proteins and serves as a scaffold for the assembly of a functional pre-initiation complex with RNA polymerase II and the general transcription factors. The polypeptide is Mediator of RNA polymerase II transcription subunit 26 (Med26) (Mus musculus (Mouse)).